The chain runs to 263 residues: Small ribosomal subunit protein eS4 (263 aa).

In terms of domain architecture, S4 RNA-binding spans 42–104; it reads LPLIIFLRNR…TGEHFRLVYD (63 aa).

Belongs to the eukaryotic ribosomal protein eS4 family. As to quaternary structure, component of the small ribosomal subunit.

The protein resides in the cytoplasm. Functionally, component of the small ribosomal subunit. The ribosome is a large ribonucleoprotein complex responsible for the synthesis of proteins in the cell. The chain is Small ribosomal subunit protein eS4 (rps4) from Xenopus tropicalis (Western clawed frog).